A 253-amino-acid polypeptide reads, in one-letter code: Proteasome subunit alpha (253 aa).

The span at 232–242 shows a compositional bias: low complexity; that stretch reads AAGASTAGEAG. The disordered stretch occupies residues 232 to 253; it reads AAGASTAGEAGSAEDEGSDDEK. A compositionally biased stretch (acidic residues) spans 243 to 253; sequence SAEDEGSDDEK.

It belongs to the peptidase T1A family. As to quaternary structure, the 20S proteasome core is composed of 14 alpha and 14 beta subunits that assemble into four stacked heptameric rings, resulting in a barrel-shaped structure. The two inner rings, each composed of seven catalytic beta subunits, are sandwiched by two outer rings, each composed of seven alpha subunits. The catalytic chamber with the active sites is on the inside of the barrel. Has a gated structure, the ends of the cylinder being occluded by the N-termini of the alpha-subunits. Is capped by the proteasome-associated ATPase, ARC.

The protein localises to the cytoplasm. Its pathway is protein degradation; proteasomal Pup-dependent pathway. The formation of the proteasomal ATPase ARC-20S proteasome complex, likely via the docking of the C-termini of ARC into the intersubunit pockets in the alpha-rings, may trigger opening of the gate for substrate entry. Interconversion between the open-gate and close-gate conformations leads to a dynamic regulation of the 20S proteasome proteolysis activity. Its function is as follows. Component of the proteasome core, a large protease complex with broad specificity involved in protein degradation. In Streptomyces avermitilis (strain ATCC 31267 / DSM 46492 / JCM 5070 / NBRC 14893 / NCIMB 12804 / NRRL 8165 / MA-4680), this protein is Proteasome subunit alpha.